The primary structure comprises 60 residues: MISIEQADKIKELVALIRKADEERINFALSGIEEFEAKVNNAVEALDMFLDEIIDHNTRV.

This is an uncharacterized protein from Enterobacteria phage T4 (Bacteriophage T4).